Reading from the N-terminus, the 238-residue chain is Ribonuclease PH (238 aa).

Residues Arg86 and 124-126 (GTR) contribute to the phosphate site.

Belongs to the RNase PH family. Homohexameric ring arranged as a trimer of dimers.

It carries out the reaction tRNA(n+1) + phosphate = tRNA(n) + a ribonucleoside 5'-diphosphate. In terms of biological role, phosphorolytic 3'-5' exoribonuclease that plays an important role in tRNA 3'-end maturation. Removes nucleotide residues following the 3'-CCA terminus of tRNAs; can also add nucleotides to the ends of RNA molecules by using nucleoside diphosphates as substrates, but this may not be physiologically important. Probably plays a role in initiation of 16S rRNA degradation (leading to ribosome degradation) during starvation. The sequence is that of Ribonuclease PH from Parvibaculum lavamentivorans (strain DS-1 / DSM 13023 / NCIMB 13966).